The primary structure comprises 271 residues: Thiamine thiazole synthase (271 aa).

Residues S39, 58–59, G66, V130, and 158–160 each bind NAD(+); these read ER and HVD. Residues D160 and H175 each coordinate Fe cation. M225 is a binding site for NAD(+). R235 is a binding site for glycine.

It belongs to the THI4 family. In terms of assembly, homooctamer; tetramer of dimers. Requires Fe(2+) as cofactor.

It carries out the reaction hydrogen sulfide + glycine + NAD(+) = ADP-5-ethyl-4-methylthiazole-2-carboxylate + nicotinamide + 3 H2O + H(+). Its pathway is cofactor biosynthesis; thiamine diphosphate biosynthesis. In terms of biological role, involved in the biosynthesis of the thiazole moiety of thiamine. Catalyzes the conversion of NAD and glycine to adenosine diphosphate 5-(2-hydroxyethyl)-4-methylthiazole-2-carboxylate (ADT), an adenylated thiazole intermediate, using free sulfide as a source of sulfur. This Metallosphaera sedula (strain ATCC 51363 / DSM 5348 / JCM 9185 / NBRC 15509 / TH2) protein is Thiamine thiazole synthase.